Reading from the N-terminus, the 200-residue chain is Peptidyl-tRNA hydrolase (200 aa).

TRNA is bound at residue Y16. The active-site Proton acceptor is the H21. TRNA-binding residues include F67, N69, and N115.

Belongs to the PTH family. Monomer.

It localises to the cytoplasm. The enzyme catalyses an N-acyl-L-alpha-aminoacyl-tRNA + H2O = an N-acyl-L-amino acid + a tRNA + H(+). Its function is as follows. Hydrolyzes ribosome-free peptidyl-tRNAs (with 1 or more amino acids incorporated), which drop off the ribosome during protein synthesis, or as a result of ribosome stalling. Catalyzes the release of premature peptidyl moieties from peptidyl-tRNA molecules trapped in stalled 50S ribosomal subunits, and thus maintains levels of free tRNAs and 50S ribosomes. This Prochlorococcus marinus (strain MIT 9312) protein is Peptidyl-tRNA hydrolase.